We begin with the raw amino-acid sequence, 254 residues long: Methyl-CpG-binding domain-containing protein 11 (254 aa).

The MBD domain occupies Glu-4–Thr-74. The interval Lys-56–Gly-254 is disordered. 4 stretches are compositionally biased toward basic and acidic residues: residues Arg-80–Lys-97, Ser-107–Glu-130, Glu-151–Ile-162, and Glu-178–Gly-254. Ser-116 carries the phosphoserine modification.

In terms of tissue distribution, expressed in leaves (around hydathodes), buds, flowers (carpels and pollen grains), stems (around nodes), siliques, mature seeds and roots.

Its subcellular location is the nucleus. In terms of biological role, transcriptional regulator that binds DNA independently of its methylation status. Required during plant organogenesis and development. The chain is Methyl-CpG-binding domain-containing protein 11 (MBD11) from Arabidopsis thaliana (Mouse-ear cress).